Reading from the N-terminus, the 1004-residue chain is LRGEVRGLPSSFRVVTSRIVNDGIGISAIVINDPEADVLVIEDCTDEYGVCVLIKGATCSMYVVSVYCRFGTALGPYLQYMENVRVKCGNTYMIMGMDANAVSPLWFSKGENLGRGRLNEANGLLLEEWILEGRMIVINEPSEWYTFSGPNGSSDIDVTLVNEAGGRFGYEWSVQPEWGVSDHNLIRIRVSLDGLVADASPSPQSARWQTRDTDWGEYMGDVKAKADVFGLAQYENVSVDEKVDLLTEWIYGANDWNMRRHTAVRTFQNEWWSVELAEKRSELRRRRHAFQRIRNAGAASLADRLQAFRDCKIEYKRMLCEAKLRCWQEFVASESNENPWGRVFKLCRGRRKPVDVCSVKVDGVYTDTWEGSVNAMMNVFFPASIDDASEIDRLKAIARPLPPDLEMDEVSDSVRRCKVRKSPGPDGIVGEMVRAVWGAIPEYMFCLYKQCLLESYFPQKWKIASLVILLKLLDRIRSDPGSYRPICLLDNLGKVLEGIMVKRLDQKLMDVEVSPYQFAFTYGKSTEDAWRCVQRHVECSEMKYVIGLNIDFQGAFDNLGWLSMLLKLDEAQSNEFGLWMSYFGGRKVYYVGKTGIVRKDVTRGCPQGSKSGPAMWKLVMNELLLALVAAGFFIVAFADDGTIVIGANSRSALEELGTRCLQLCHEWGKRVCVPVSAGKTTCILMKGHLSANRPPCIRLNGTSISYKSEVKHLGIFVAERMNFRPHFVYLRGKILGLVGCLRRVMRKSWGLGRRATCILYKGLFVACMSYGASVWFRTLRFSYASILLNRCQRLVLYASLNVCRTVSTERMQVLHGELPWDLEATRRGLLSEFRKGITPVDGDPITDEEMLGLSGSQFKELLMERLLDVWQGRWDVSEKGRLTHEFIPSVRFVRENEWMAFGLCLGYVLTGHGSMNGFLHKRGLSNTPVCMCGAPNEDVKHLLGECPLYEDLRDLNGCGLLIRNGSLDVSGALSEIGAFEKLNQFAVSLFGRRSRLMRGMRIRE.

The 268-residue stretch at 450–717 (QCLLESYFPQ…SEVKHLGIFV (268 aa)) folds into the Reverse transcriptase domain. Residues 853-1004 (LSGSQFKELL…RLMRGMRIRE (152 aa)) are nucleic acid-binding endonuclease.

It carries out the reaction DNA(n) + a 2'-deoxyribonucleoside 5'-triphosphate = DNA(n+1) + diphosphate. The sequence is that of Retrovirus-related Pol polyprotein from type-1 retrotransposable element R1 from Bradysia coprophila (Dark-winged fungus gnat).